A 601-amino-acid polypeptide reads, in one-letter code: Probable translation initiation factor IF-2 (601 aa).

Residues 14 to 229 (LRTPIVAVLG…VMMGLSQRYM (216 aa)) enclose the tr-type G domain. Residues 23 to 30 (GHVDHGKT) form a G1 region. 23–30 (GHVDHGKT) serves as a coordination point for GTP. Positions 48–52 (AITQH) are G2. The interval 85–88 (DTPG) is G3. Residues 85–89 (DTPGH) and 139–142 (NKID) contribute to the GTP site. Residues 139-142 (NKID) form a G4 region. The interval 207–209 (SAE) is G5.

It belongs to the TRAFAC class translation factor GTPase superfamily. Classic translation factor GTPase family. IF-2 subfamily.

Functionally, function in general translation initiation by promoting the binding of the formylmethionine-tRNA to ribosomes. Seems to function along with eIF-2. The polypeptide is Probable translation initiation factor IF-2 (Haloarcula marismortui (strain ATCC 43049 / DSM 3752 / JCM 8966 / VKM B-1809) (Halobacterium marismortui)).